The sequence spans 598 residues: Cytochrome P450 monooxygenase phmB (598 aa).

Residues 107-127 (VAAKIAALLFVAGLFWAVSVL) form a helical membrane-spanning segment. N-linked (GlcNAc...) asparagine glycosylation is found at asparagine 171, asparagine 428, and asparagine 494. Cysteine 542 is a heme binding site. N-linked (GlcNAc...) asparagine glycans are attached at residues asparagine 549 and asparagine 581.

It belongs to the cytochrome P450 family. The cofactor is heme.

Its subcellular location is the membrane. It participates in mycotoxin biosynthesis. Cytochrome P450 monooxygenase; part of the gene cluster that mediates the biosynthesis of the mycotoxins phomacins, leucine-derived cytochalasans with potent actin polymerization-inhibitory activities and monocot-specific antigerminative activities. The first step in the pathway is catalyzed by the hybrid PKS-NRPS phmA, assisted by the enoyl reductase phmE, that are responsible for fusion of the leucine precursor and the polyketide backbone to produce a 2-pyrrolidone intermediate. The polyketide synthase module (PKS) of phmA is responsible for the synthesis of the polyketide backbone and the downstream nonribosomal peptide synthetase (NRPS) amidates the carboxyl end of the polyketide with the leucine precursor. Because phmA lacks a designated enoylreductase (ER) domain, the required activity is provided the enoyl reductase phmE. Reduction by the hydrolyase phmG, followed by dehydration and intra-molecular Diels-Alder cyclization by the Diels-Alderase phmD then yield the required isoindolone-fused macrocycle. A number of oxidative steps catalyzed by the tailoring cytochrome P450 monooxygenase phmB, the FAD-linked oxidoreductase phmC and the short-chain dehydrogenase/reductase phmF, are further required to afford the final products, phomacin D and phomacin E. The polypeptide is Cytochrome P450 monooxygenase phmB (Phaeosphaeria nodorum (strain SN15 / ATCC MYA-4574 / FGSC 10173) (Glume blotch fungus)).